The following is a 426-amino-acid chain: Endothelin-1 receptor (426 aa).

The signal sequence occupies residues 1-20; sequence METFCLKVTFWVALVGYVIG. Over 21–79 the chain is Extracellular; that stretch reads DHPESYSTNLSTPVDFTTFHGTELSFLVTTHRPTNLALPSNGSMHSYCPQQTKITSAFK. Asn-29 and Asn-61 each carry an N-linked (GlcNAc...) asparagine glycan. Residues 80-101 traverse the membrane as a helical segment; it reads YINTVISCTIFIVGMVGNATLL. Over 102-111 the chain is Cytoplasmic; sequence RIIYQNKCMR. The helical transmembrane segment at 112–131 threads the bilayer; sequence NGPNALIASLALGDLIYVVI. Over 132–158 the chain is Extracellular; it reads DLPINVFKLLAGRWPFDHNDFGVFLCK. An intrachain disulfide couples Cys-157 to Cys-238. Residues 159–180 form a helical membrane-spanning segment; that stretch reads LFPFLQKSSVGITVLNLCALSV. Topologically, residues 181-204 are cytoplasmic; it reads DRYRAVASWSRVQGIGIPLITAIE. A helical membrane pass occupies residues 205-228; it reads IVSIWILSFILAIPEAIGFVMVPF. The Extracellular portion of the chain corresponds to 229–255; the sequence is EYKGEQHKTCMLNATSKFMEFYQDVKD. The N-linked (GlcNAc...) asparagine glycan is linked to Asn-241. The chain crosses the membrane as a helical span at residues 256–277; it reads WWLFGFYFCMPLVCTAIFYTLM. At 278–305 the chain is on the cytoplasmic side; the sequence is TCEMLNRRNGSLRIALSEHLKQRREVAK. The helical transmembrane segment at 306–327 threads the bilayer; sequence TVFCLVVIFALCWFPLHLSRIL. The Extracellular portion of the chain corresponds to 328–346; that stretch reads KKTVYDEMDKNRCELLSFL. Residues 347–371 traverse the membrane as a helical segment; it reads RLMDYIGINLATMNSCINPIALYFV. Over 372–426 the chain is Cytoplasmic; it reads SKKFKNCFQSCLCCCCYQSKSLMTSVPMNGTSIQWKNHEQNNHNTERSSHKDSIN. Ser-424 is subject to Phosphoserine.

This sequence belongs to the G-protein coupled receptor 1 family. Endothelin receptor subfamily. EDNRA sub-subfamily. In terms of assembly, interacts with HDAC7 and KAT5.

It localises to the cell membrane. Receptor for endothelin-1. Mediates its action by association with G proteins that activate a phosphatidylinositol-calcium second messenger system. The rank order of binding affinities for ET-A is: ET1 &gt; ET2 &gt;&gt; ET3. This Canis lupus familiaris (Dog) protein is Endothelin-1 receptor.